Here is a 480-residue protein sequence, read N- to C-terminus: Protein nucleotidyltransferase YdiU (480 aa).

The ATP site is built by Gly86, Gly88, Arg89, Lys109, Asp121, Gly122, Arg172, and Arg179. Asp248 (proton acceptor) is an active-site residue. Asn249 and Asp258 together coordinate Mg(2+). Asp258 is an ATP binding site.

The protein belongs to the SELO family. Mg(2+) is required as a cofactor. The cofactor is Mn(2+).

The enzyme catalyses L-seryl-[protein] + ATP = 3-O-(5'-adenylyl)-L-seryl-[protein] + diphosphate. It catalyses the reaction L-threonyl-[protein] + ATP = 3-O-(5'-adenylyl)-L-threonyl-[protein] + diphosphate. The catalysed reaction is L-tyrosyl-[protein] + ATP = O-(5'-adenylyl)-L-tyrosyl-[protein] + diphosphate. It carries out the reaction L-histidyl-[protein] + UTP = N(tele)-(5'-uridylyl)-L-histidyl-[protein] + diphosphate. The enzyme catalyses L-seryl-[protein] + UTP = O-(5'-uridylyl)-L-seryl-[protein] + diphosphate. It catalyses the reaction L-tyrosyl-[protein] + UTP = O-(5'-uridylyl)-L-tyrosyl-[protein] + diphosphate. Nucleotidyltransferase involved in the post-translational modification of proteins. It can catalyze the addition of adenosine monophosphate (AMP) or uridine monophosphate (UMP) to a protein, resulting in modifications known as AMPylation and UMPylation. In Enterobacter sp. (strain 638), this protein is Protein nucleotidyltransferase YdiU.